A 671-amino-acid polypeptide reads, in one-letter code: ATP-dependent zinc metalloprotease FtsH (671 aa).

Over 1–22 the chain is Cytoplasmic; that stretch reads MANPNNNNDNKQNNNNNFFNDN. Residues 23-43 traverse the membrane as a helical segment; it reads PLLAFAIFSIVIILIFKSFVG. At 44-130 the chain is on the periplasmic side; the sequence is EGESLGTMMN…ISYEGVVGNG (87 aa). A helical transmembrane segment spans residues 131–151; sequence FFSELISMMLPILIFFAIWIF. At 152 to 671 the chain is on the cytoplasmic side; sequence LAKKMSKGMG…SEESDNNKEA (520 aa). 224 to 231 serves as a coordination point for ATP; that stretch reads GPPGTGKT. Histidine 447 contributes to the Zn(2+) binding site. The active site involves glutamate 448. Zn(2+)-binding residues include histidine 451 and aspartate 525. The disordered stretch occupies residues 630-671; sequence EKGMPSRLAHKDKVAKNKAEADKKEEALKKEISEESDNNKEA.

In the central section; belongs to the AAA ATPase family. This sequence in the C-terminal section; belongs to the peptidase M41 family. Homohexamer. It depends on Zn(2+) as a cofactor.

The protein localises to the cell inner membrane. Acts as a processive, ATP-dependent zinc metallopeptidase for both cytoplasmic and membrane proteins. Plays a role in the quality control of integral membrane proteins. The sequence is that of ATP-dependent zinc metalloprotease FtsH from Sulfurovum sp. (strain NBC37-1).